Here is a 136-residue protein sequence, read N- to C-terminus: Small ribosomal subunit protein uS9 (136 aa).

A disordered region spans residues 111 to 136; sequence TRDPRMKERKKTGQPGARKRFQFSKR. Residues 117–136 show a composition bias toward basic residues; the sequence is KERKKTGQPGARKRFQFSKR.

It belongs to the universal ribosomal protein uS9 family.

In Methylacidiphilum infernorum (isolate V4) (Methylokorus infernorum (strain V4)), this protein is Small ribosomal subunit protein uS9.